The sequence spans 203 residues: Small ribosomal subunit protein uS4c (203 aa).

Residues 15 to 42 are disordered; it reads LGALPGLTSKRPRAGSDPRNQELSGNKS. In terms of domain architecture, S4 RNA-binding spans 89–150; sequence MRLDNILFRL…DQKSKAMIQN (62 aa).

This sequence belongs to the universal ribosomal protein uS4 family. In terms of assembly, part of the 30S ribosomal subunit. Contacts protein S5. The interaction surface between S4 and S5 is involved in control of translational fidelity.

The protein resides in the plastid. It localises to the chloroplast. In terms of biological role, one of the primary rRNA binding proteins, it binds directly to 16S rRNA where it nucleates assembly of the body of the 30S subunit. With S5 and S12 plays an important role in translational accuracy. This is Small ribosomal subunit protein uS4c (rps4) from Oenothera elata subsp. hookeri (Hooker's evening primrose).